A 196-amino-acid polypeptide reads, in one-letter code: HTH-type transcriptional regulator EcpR (196 aa).

One can recognise an HTH luxR-type domain in the interval 138-196 (KDIKKDKITDREMEIIRMTAQGMLPKSIARIENCSVKTVYTHRRNAEAKLYSKLYKLVQ). The segment at residues 162-181 (PKSIARIENCSVKTVYTHRR) is a DNA-binding region (H-T-H motif).

It belongs to the EcpR/MatA family.

It is found in the cytoplasm. In terms of biological role, part of the ecpRABCDE operon, which encodes the E.coli common pilus (ECP). ECP is found in both commensal and pathogenic strains and plays a dual role in early-stage biofilm development and host cell recognition. Positively regulates the expression of the ecp operon by binding to two TTCCT boxes. The polypeptide is HTH-type transcriptional regulator EcpR (ecpR) (Escherichia coli O157:H7).